A 310-amino-acid chain; its full sequence is Ceramide synthase LOH1 (310 aa).

A run of 6 helical transmembrane segments spans residues 16 to 36 (SFPT…FPTI), 85 to 105 (CIYY…EPWF), 131 to 151 (FLYM…VFWE), 157 to 177 (FGVS…SYIC), 216 to 236 (FVLF…FWIL), and 260 to 280 (YMFN…WVLI). The 214-residue stretch at 76–289 (RKFKESAWKC…IYRMLVKQVQ (214 aa)) folds into the TLC domain. Residues serine 300 and serine 302 each carry the phosphoserine modification.

In terms of tissue distribution, expressed ubiquitously at high levels. Not observed in pollen.

It localises to the endoplasmic reticulum membrane. The catalysed reaction is (4R)-hydroxysphinganine + a fatty acyl-CoA = an N-acyl-(4R)-4-hydroxysphinganine + CoA + H(+). It catalyses the reaction hexacosanoyl-CoA + (4R)-hydroxysphinganine = N-hexacosanoyl-(4R)-hydroxysphinganine + CoA + H(+). The enzyme catalyses tetracosanoyl-CoA + (4R)-hydroxysphinganine = N-tetracosanoyl-(4R)-hydroxysphinganine + CoA + H(+). It functions in the pathway sphingolipid metabolism. With respect to regulation, inhibited by the mycotoxin fumonisin B(1), a sphingosine analog mycotoxins produced by pathogenic fungi. Repressed by divalent cation such as magnesium Mg(2+), copper Cu(2+), zinc Zn(2+), manganese Mn(2+), calcium Ca(2+) and cobalt Co(2+). In terms of biological role, essential for plant growth, promotes cell division in root meristems. Catalyzes the biosynthesis of ceramide sphingolipids with C(16) to C(28) fatty acids, structural membrane lipids involved in membrane trafficking (e.g. early endosomes) and cell polarity (e.g. polar auxin transport related proteins); mostly active with t18:0 and saturated very long saturated fatty acids (C24:0 and C26:0), such as long-chain base (LCB) phytosphingosine (t18:0), lignoceroyl- and hexacosanoyl-CoAs. Mediates resistance to sphinganine-analog mycotoxins (SAMs, e.g. fumonisin B(1)) by restoring the sphingolipid biosynthesis. Could salvage the transport of GPI-anchored proteins from the endoplasmic reticulum to the Golgi apparatus in ceramides-depleted cells after SAM exposure. May prevent precocious cell death by delaying PR1 accumulation during aging. Contributes to hypoxic conditions tolerance (e.g. submergences), especially in the dark, by promoting the formation of very-long-chain (VLC) ceramide species (22:1, 24:1 and 26:1) and of VLC unsaturated ceramides, which are modulating CTR1-mediated ethylene signaling leading to endoplasmic reticulum (ER)-to-nucleus translocation of EIN2 and EIN3. The polypeptide is Ceramide synthase LOH1 (Arabidopsis thaliana (Mouse-ear cress)).